We begin with the raw amino-acid sequence, 458 residues long: UDP-N-acetylmuramate--L-alanine ligase (458 aa).

112–118 (GTHGKTT) serves as a coordination point for ATP.

The protein belongs to the MurCDEF family.

The protein localises to the cytoplasm. It catalyses the reaction UDP-N-acetyl-alpha-D-muramate + L-alanine + ATP = UDP-N-acetyl-alpha-D-muramoyl-L-alanine + ADP + phosphate + H(+). The protein operates within cell wall biogenesis; peptidoglycan biosynthesis. Its function is as follows. Cell wall formation. In Syntrophotalea carbinolica (strain DSM 2380 / NBRC 103641 / GraBd1) (Pelobacter carbinolicus), this protein is UDP-N-acetylmuramate--L-alanine ligase.